The following is a 414-amino-acid chain: DNA polymerase IV 1 (414 aa).

Residues 8–189 form the UmuC domain; sequence IFHIDMNSFY…LPVGEMHGVG (182 aa). The Mg(2+) site is built by Asp12 and Asp108. Glu109 is an active-site residue. Residues 391–414 form a disordered region; that stretch reads LKKEESKTKGTSFNKDFFQDEKKS.

The protein belongs to the DNA polymerase type-Y family. As to quaternary structure, monomer. Mg(2+) is required as a cofactor.

The protein resides in the cytoplasm. It carries out the reaction DNA(n) + a 2'-deoxyribonucleoside 5'-triphosphate = DNA(n+1) + diphosphate. Functionally, poorly processive, error-prone DNA polymerase involved in untargeted mutagenesis. Copies undamaged DNA at stalled replication forks, which arise in vivo from mismatched or misaligned primer ends. These misaligned primers can be extended by PolIV. Exhibits no 3'-5' exonuclease (proofreading) activity. May be involved in translesion synthesis (TSL), in conjunction with the beta clamp from PolIII. The polypeptide is DNA polymerase IV 1 (dinB1) (Bacillus subtilis (strain 168)).